Here is a 128-residue protein sequence, read N- to C-terminus: Ribonuclease P protein component (128 aa).

Belongs to the RnpA family. As to quaternary structure, consists of a catalytic RNA component (M1 or rnpB) and a protein subunit.

It carries out the reaction Endonucleolytic cleavage of RNA, removing 5'-extranucleotides from tRNA precursor.. Functionally, RNaseP catalyzes the removal of the 5'-leader sequence from pre-tRNA to produce the mature 5'-terminus. It can also cleave other RNA substrates such as 4.5S RNA. The protein component plays an auxiliary but essential role in vivo by binding to the 5'-leader sequence and broadening the substrate specificity of the ribozyme. The chain is Ribonuclease P protein component from Prochlorococcus marinus (strain MIT 9303).